The following is a 34-amino-acid chain: NU-buthitoxin-Ptr1a (34 aa).

Disulfide bonds link cysteine 6/cysteine 27, cysteine 12/cysteine 32, and cysteine 16/cysteine 34.

As to expression, expressed by the venom gland.

The protein resides in the secreted. Its function is as follows. Toxin that acts as an agonist on melanocortin receptors (MC1R, MC3R, MC5R, MC5R). After binding to MC1R, the peptide activates the hMC1R/Gs pathway, but after binding to MC4R, it is not able to activate or antagonize the MC4R/Gs pathway. Inhibits melanocyte stimulating hormone (MSH)-binding to human receptors (Ki=2.9 uM to MC1R, Ki=3.9 uM to MC3R, Ki=2.6 uM to MC4R, Ki=2.2 uM to MC5R). This toxin is structurally unrelated to the natural agonists. The chain is NU-buthitoxin-Ptr1a from Parabuthus transvaalicus (Transvaal thick-tailed scorpion).